A 500-amino-acid chain; its full sequence is Protein nucleotidyltransferase YdiU (500 aa).

ATP-binding residues include Gly-96, Gly-98, Arg-99, Lys-119, Asp-131, Gly-132, Arg-182, and Arg-189. The active-site Proton acceptor is the Asp-258. Positions 259 and 268 each coordinate Mg(2+). Asp-268 contributes to the ATP binding site.

It belongs to the SELO family. Mg(2+) serves as cofactor. It depends on Mn(2+) as a cofactor.

It catalyses the reaction L-seryl-[protein] + ATP = 3-O-(5'-adenylyl)-L-seryl-[protein] + diphosphate. It carries out the reaction L-threonyl-[protein] + ATP = 3-O-(5'-adenylyl)-L-threonyl-[protein] + diphosphate. The enzyme catalyses L-tyrosyl-[protein] + ATP = O-(5'-adenylyl)-L-tyrosyl-[protein] + diphosphate. The catalysed reaction is L-histidyl-[protein] + UTP = N(tele)-(5'-uridylyl)-L-histidyl-[protein] + diphosphate. It catalyses the reaction L-seryl-[protein] + UTP = O-(5'-uridylyl)-L-seryl-[protein] + diphosphate. It carries out the reaction L-tyrosyl-[protein] + UTP = O-(5'-uridylyl)-L-tyrosyl-[protein] + diphosphate. Functionally, nucleotidyltransferase involved in the post-translational modification of proteins. It can catalyze the addition of adenosine monophosphate (AMP) or uridine monophosphate (UMP) to a protein, resulting in modifications known as AMPylation and UMPylation. In Rhizobium etli (strain CIAT 652), this protein is Protein nucleotidyltransferase YdiU.